A 155-amino-acid polypeptide reads, in one-letter code: Ribosomal RNA large subunit methyltransferase H (155 aa).

S-adenosyl-L-methionine contacts are provided by residues Leu-72, Gly-103, and 122–127 (LSPLTL).

The protein belongs to the RNA methyltransferase RlmH family. In terms of assembly, homodimer.

Its subcellular location is the cytoplasm. The enzyme catalyses pseudouridine(1915) in 23S rRNA + S-adenosyl-L-methionine = N(3)-methylpseudouridine(1915) in 23S rRNA + S-adenosyl-L-homocysteine + H(+). Functionally, specifically methylates the pseudouridine at position 1915 (m3Psi1915) in 23S rRNA. The protein is Ribosomal RNA large subunit methyltransferase H of Pasteurella multocida (strain Pm70).